Reading from the N-terminus, the 366-residue chain is Probable quinol oxidase subunit 2 (366 aa).

A signal peptide spans 1–19 (MSKFKSLLLLFGTLILLSG). Residue cysteine 20 is the site of N-palmitoyl cysteine attachment. Cysteine 20 carries S-diacylglycerol cysteine lipidation. The next 2 helical transmembrane spans lie at 38–58 (FLIL…LGMF) and 80–100 (AIIE…LAIP). Residues 330–366 (EPYNNEFKKDESKNAKEMKKISKDAQDQDNDDHGGGH) form a disordered region. The segment covering 335–366 (EFKKDESKNAKEMKKISKDAQDQDNDDHGGGH) has biased composition (basic and acidic residues).

Belongs to the cytochrome c oxidase subunit 2 family.

The protein resides in the cell membrane. It carries out the reaction 2 a quinol + O2 = 2 a quinone + 2 H2O. Its function is as follows. Catalyzes quinol oxidation with the concomitant reduction of oxygen to water. Subunit II transfers the electrons from a quinol to the binuclear center of the catalytic subunit I. This is Probable quinol oxidase subunit 2 (qoxA) from Staphylococcus aureus (strain USA300).